We begin with the raw amino-acid sequence, 113 residues long: Nucleoid-associated protein P9303_00241 (113 aa).

The tract at residues 90–113 (TTTMKEQMEELTGGLNLNLPGMSD) is disordered.

This sequence belongs to the YbaB/EbfC family. In terms of assembly, homodimer.

Its subcellular location is the cytoplasm. It localises to the nucleoid. Its function is as follows. Binds to DNA and alters its conformation. May be involved in regulation of gene expression, nucleoid organization and DNA protection. This is Nucleoid-associated protein P9303_00241 from Prochlorococcus marinus (strain MIT 9303).